The primary structure comprises 961 residues: Copper-exporting P-type ATPase (961 aa).

2 HMA domains span residues 3-64 (QTTL…YQAT) and 69-130 (PDVE…YHAT). Cu(+) is bound by residues C14, C17, C80, and C83. Disordered regions lie at residues 131-153 (QQGI…PESL) and 178-201 (VLPT…TASA). Positions 142–151 (LTHSAQSQPE) are enriched in polar residues. The 64-residue stretch at 226–289 (ESVQLLLTGM…AVKNAGYGAE (64 aa)) folds into the HMA 3 domain. Residues C237 and C240 each contribute to the Cu(+) site. The next 5 helical transmembrane spans lie at 316–336 (AALG…GGSM), 345–365 (PWLI…GHFY), 381–401 (TLVA…NIWP), 565–585 (AVFV…WYFF), and 592–612 (VYTL…ALGL). The 4-aspartylphosphate intermediate role is filled by D650. Mg(2+) contacts are provided by D847 and D851. A run of 3 helical transmembrane segments spans residues 860 to 880 (VGIA…ITLM), 906 to 926 (LGAF…LYPF), and 928 to 948 (GTLL…ITVV).

The protein belongs to the cation transport ATPase (P-type) (TC 3.A.3) family. Type IB subfamily.

Its subcellular location is the cell membrane. It carries out the reaction Cu(+)(in) + ATP + H2O = Cu(+)(out) + ADP + phosphate + H(+). Functionally, involved in copper export. This chain is Copper-exporting P-type ATPase (copA), found in Yersinia pestis.